A 382-amino-acid chain; its full sequence is Dual-specificity RNA methyltransferase RlmN (382 aa).

Catalysis depends on Glu96, which acts as the Proton acceptor. The Radical SAM core domain maps to 102–342 (QGGRGTLCVS…VRTTRGEDID (241 aa)). Residues Cys109 and Cys345 are joined by a disulfide bond. Residues Cys116, Cys120, and Cys123 each coordinate [4Fe-4S] cluster. Residues 170–171 (GE), Ser202, 224–226 (SLH), and Asn302 each bind S-adenosyl-L-methionine. Cys345 serves as the catalytic S-methylcysteine intermediate.

The protein belongs to the radical SAM superfamily. RlmN family. [4Fe-4S] cluster serves as cofactor.

Its subcellular location is the cytoplasm. It carries out the reaction adenosine(2503) in 23S rRNA + 2 reduced [2Fe-2S]-[ferredoxin] + 2 S-adenosyl-L-methionine = 2-methyladenosine(2503) in 23S rRNA + 5'-deoxyadenosine + L-methionine + 2 oxidized [2Fe-2S]-[ferredoxin] + S-adenosyl-L-homocysteine. It catalyses the reaction adenosine(37) in tRNA + 2 reduced [2Fe-2S]-[ferredoxin] + 2 S-adenosyl-L-methionine = 2-methyladenosine(37) in tRNA + 5'-deoxyadenosine + L-methionine + 2 oxidized [2Fe-2S]-[ferredoxin] + S-adenosyl-L-homocysteine. Specifically methylates position 2 of adenine 2503 in 23S rRNA and position 2 of adenine 37 in tRNAs. m2A2503 modification seems to play a crucial role in the proofreading step occurring at the peptidyl transferase center and thus would serve to optimize ribosomal fidelity. This is Dual-specificity RNA methyltransferase RlmN from Stutzerimonas stutzeri (strain A1501) (Pseudomonas stutzeri).